The sequence spans 308 residues: Ribonuclease HIII (308 aa).

One can recognise an RNase H type-2 domain in the interval 91–308 (KNVIGSDEVG…TEKALKMVKK (218 aa)). A divalent metal cation contacts are provided by aspartate 97, glutamate 98, and aspartate 202.

This sequence belongs to the RNase HII family. RnhC subfamily. It depends on Mn(2+) as a cofactor. Requires Mg(2+) as cofactor.

The protein resides in the cytoplasm. It carries out the reaction Endonucleolytic cleavage to 5'-phosphomonoester.. Endonuclease that specifically degrades the RNA of RNA-DNA hybrids. This Listeria monocytogenes serotype 4b (strain CLIP80459) protein is Ribonuclease HIII.